The following is a 267-amino-acid chain: MKGILGRKVGMTQIYTELGQRIPVTVVEVKPNVVSKVLTVEKNGYFATQLATVEKKAKRVNRPLAGQFIQAKTTPKQYIKEIRGMEGYELGQEVNASIFSAGELVDITGISKGKGFAGTIKRWNQHIGPKSHGGGGGSQPVRQTGSLGDISGNRVVKGMTMPGHLGSEKTTVQNLEIVKVDTVNNLLLVKGSIPGAKKSFVIIKQAVKGLPTKEAIKLVNVKEVVKMNELIEKAKKFNIEVTVGMTSAELEPLIHKAEEEQAAEGDK.

The tract at residues 124–147 is disordered; the sequence is NQHIGPKSHGGGGGSQPVRQTGSL.

Belongs to the universal ribosomal protein uL3 family. In terms of assembly, part of the 50S ribosomal subunit. Forms a cluster with proteins L14 and L19.

Its function is as follows. One of the primary rRNA binding proteins, it binds directly near the 3'-end of the 23S rRNA, where it nucleates assembly of the 50S subunit. The protein is Large ribosomal subunit protein uL3 of Mycoplasmopsis agalactiae (strain NCTC 10123 / CIP 59.7 / PG2) (Mycoplasma agalactiae).